Consider the following 328-residue polypeptide: Interleukin-12 subunit beta (328 aa).

An N-terminal signal peptide occupies residues 1–22; sequence MCHQQLVISWFSLVFLASPLMA. In terms of domain architecture, Ig-like C2-type spans 29 to 106; the sequence is DVYVVELDWY…LSHSLLLLHK (78 aa). Cysteine 50 and cysteine 90 form a disulfide bridge. 3 N-linked (GlcNAc...) asparagine glycosylation sites follow: asparagine 125, asparagine 135, and asparagine 222. A Fibronectin type-III domain is found at 237–328; that stretch reads PPKNLQLKPL…WSEWASVPCS (92 aa).

This sequence belongs to the IL-12B family. In terms of assembly, heterodimer with IL12A; disulfide-linked. The heterodimer is known as interleukin IL-12. Heterodimer with IL23A; disulfide-linked. The heterodimer is known as interleukin IL-23. Also secreted as a monomer. Interacts with NBR1; this interaction promotes IL-12 secretion.

The protein localises to the secreted. In terms of biological role, cytokine that can act as a growth factor for activated T and NK cells, enhance the lytic activity of NK/lymphokine-activated killer cells, and stimulate the production of IFN-gamma by resting PBMC. Functionally, associates with IL23A to form the IL-23 interleukin, a heterodimeric cytokine which functions in innate and adaptive immunity. IL-23 may constitute with IL-17 an acute response to infection in peripheral tissues. IL-23 binds to a heterodimeric receptor complex composed of IL12RB1 and IL23R, activates the Jak-Stat signaling cascade, stimulates memory rather than naive T-cells and promotes production of pro-inflammatory cytokines. IL-23 induces autoimmune inflammation and thus may be responsible for autoimmune inflammatory diseases and may be important for tumorigenesis. This Macaca mulatta (Rhesus macaque) protein is Interleukin-12 subunit beta (IL12B).